Consider the following 918-residue polypeptide: Probable lipoxygenase 6 (918 aa).

Residues 56–76 form a disordered region; it reads AASPSSGIKGGGAGERRPAPE. Residues 90 to 218 form the PLAT domain; the sequence is QKEDIKEAVA…ELPTKRVFFS (129 aa). The Lipoxygenase domain occupies 221-918; sequence PYLPSETPPG…CRGVPNSISI (698 aa). 5 residues coordinate Fe cation: His573, His578, His765, Asn769, and Ile918.

Belongs to the lipoxygenase family. The cofactor is Fe cation.

The catalysed reaction is (9Z,12Z)-octadecadienoate + O2 = (13S)-hydroperoxy-(9Z,11E)-octadecadienoate. It catalyses the reaction (9Z,12Z,15Z)-octadecatrienoate + O2 = (13S)-hydroperoxy-(9Z,11E,15Z)-octadecatrienoate. The protein operates within lipid metabolism; oxylipin biosynthesis. In terms of biological role, plant lipoxygenase may be involved in a number of diverse aspects of plant physiology including growth and development, pest resistance, and senescence or responses to wounding. Catalyzes the hydroperoxidation of lipids containing a cis,cis-1,4-pentadiene structure. This is Probable lipoxygenase 6 from Oryza sativa subsp. japonica (Rice).